A 334-amino-acid chain; its full sequence is Large ribosomal subunit protein uL3 (334 aa).

The segment covering 1–10 has biased composition (basic residues); sequence MGMKKNRPRR. A disordered region spans residues 1–21; the sequence is MGMKKNRPRRGSLAFSPRKRA.

This sequence belongs to the universal ribosomal protein uL3 family. As to quaternary structure, part of the 50S ribosomal subunit. Forms a cluster with proteins L14 and L24e.

Its function is as follows. One of the primary rRNA binding proteins, it binds directly near the 3'-end of the 23S rRNA, where it nucleates assembly of the 50S subunit. The sequence is that of Large ribosomal subunit protein uL3 from Methanococcus vannielii (strain ATCC 35089 / DSM 1224 / JCM 13029 / OCM 148 / SB).